The chain runs to 318 residues: tRNA U34 carboxymethyltransferase (318 aa).

Carboxy-S-adenosyl-L-methionine contacts are provided by residues Lys-88, Trp-102, Lys-107, Gly-126, 176–177 (LE), Met-192, Tyr-196, and Arg-311.

This sequence belongs to the class I-like SAM-binding methyltransferase superfamily. CmoB family. Homotetramer.

The enzyme catalyses carboxy-S-adenosyl-L-methionine + 5-hydroxyuridine(34) in tRNA = 5-carboxymethoxyuridine(34) in tRNA + S-adenosyl-L-homocysteine + H(+). Functionally, catalyzes carboxymethyl transfer from carboxy-S-adenosyl-L-methionine (Cx-SAM) to 5-hydroxyuridine (ho5U) to form 5-carboxymethoxyuridine (cmo5U) at position 34 in tRNAs. This chain is tRNA U34 carboxymethyltransferase, found in Pseudomonas putida (strain GB-1).